Reading from the N-terminus, the 357-residue chain is Glutamate 5-kinase (357 aa).

Lys7 contributes to the ATP binding site. Substrate is bound by residues Ser43, Asp130, and Asn142. Residue 162–163 (TD) coordinates ATP. One can recognise a PUA domain in the interval 270 to 347 (QGELTLDAGA…PAAGPSPVVV (78 aa)).

Belongs to the glutamate 5-kinase family.

It is found in the cytoplasm. It catalyses the reaction L-glutamate + ATP = L-glutamyl 5-phosphate + ADP. It functions in the pathway amino-acid biosynthesis; L-proline biosynthesis; L-glutamate 5-semialdehyde from L-glutamate: step 1/2. Catalyzes the transfer of a phosphate group to glutamate to form L-glutamate 5-phosphate. This Parasynechococcus marenigrum (strain WH8102) protein is Glutamate 5-kinase.